The following is a 600-amino-acid chain: Proline--tRNA ligase (600 aa).

This sequence belongs to the class-II aminoacyl-tRNA synthetase family. ProS type 1 subfamily. In terms of assembly, homodimer.

Its subcellular location is the cytoplasm. It carries out the reaction tRNA(Pro) + L-proline + ATP = L-prolyl-tRNA(Pro) + AMP + diphosphate. Functionally, catalyzes the attachment of proline to tRNA(Pro) in a two-step reaction: proline is first activated by ATP to form Pro-AMP and then transferred to the acceptor end of tRNA(Pro). As ProRS can inadvertently accommodate and process non-cognate amino acids such as alanine and cysteine, to avoid such errors it has two additional distinct editing activities against alanine. One activity is designated as 'pretransfer' editing and involves the tRNA(Pro)-independent hydrolysis of activated Ala-AMP. The other activity is designated 'posttransfer' editing and involves deacylation of mischarged Ala-tRNA(Pro). The misacylated Cys-tRNA(Pro) is not edited by ProRS. This chain is Proline--tRNA ligase, found in Prochlorococcus marinus (strain MIT 9515).